Reading from the N-terminus, the 504-residue chain is ATP synthase subunit alpha (504 aa).

An ATP-binding site is contributed by 171-178 (GDRQTGKT).

This sequence belongs to the ATPase alpha/beta chains family. As to quaternary structure, F-type ATPases have 2 components, CF(1) - the catalytic core - and CF(0) - the membrane proton channel. CF(1) has five subunits: alpha(3), beta(3), gamma(1), delta(1), epsilon(1). CF(0) has three main subunits: a(1), b(2) and c(9-12). The alpha and beta chains form an alternating ring which encloses part of the gamma chain. CF(1) is attached to CF(0) by a central stalk formed by the gamma and epsilon chains, while a peripheral stalk is formed by the delta and b chains.

Its subcellular location is the cell inner membrane. It catalyses the reaction ATP + H2O + 4 H(+)(in) = ADP + phosphate + 5 H(+)(out). Functionally, produces ATP from ADP in the presence of a proton gradient across the membrane. The alpha chain is a regulatory subunit. The polypeptide is ATP synthase subunit alpha (Sulfurovum sp. (strain NBC37-1)).